The sequence spans 176 residues: Small ribosomal subunit protein uS5 (176 aa).

The 64-residue stretch at 14–77 (MQEKLIHINR…DQARRWMTSI (64 aa)) folds into the S5 DRBM domain.

Belongs to the universal ribosomal protein uS5 family. As to quaternary structure, part of the 30S ribosomal subunit. Contacts proteins S4 and S8.

With S4 and S12 plays an important role in translational accuracy. In terms of biological role, located at the back of the 30S subunit body where it stabilizes the conformation of the head with respect to the body. This is Small ribosomal subunit protein uS5 from Acidithiobacillus ferrooxidans (strain ATCC 23270 / DSM 14882 / CIP 104768 / NCIMB 8455) (Ferrobacillus ferrooxidans (strain ATCC 23270)).